The chain runs to 184 residues: Nucleoside triphosphate pyrophosphatase (184 aa).

Asp-66 acts as the Proton acceptor in catalysis.

Belongs to the Maf family. A divalent metal cation is required as a cofactor.

It localises to the cytoplasm. It carries out the reaction a ribonucleoside 5'-triphosphate + H2O = a ribonucleoside 5'-phosphate + diphosphate + H(+). The enzyme catalyses a 2'-deoxyribonucleoside 5'-triphosphate + H2O = a 2'-deoxyribonucleoside 5'-phosphate + diphosphate + H(+). In terms of biological role, nucleoside triphosphate pyrophosphatase. May have a dual role in cell division arrest and in preventing the incorporation of modified nucleotides into cellular nucleic acids. The polypeptide is Nucleoside triphosphate pyrophosphatase (Prochlorococcus marinus (strain MIT 9313)).